The chain runs to 340 residues: Chorismate mutase 1, chloroplastic (340 aa).

The transit peptide at 1–65 directs the protein to the chloroplast; the sequence is MEASLLMRSS…KPRSGTSSVH (65 aa). Residue A66 is modified to N-acetylalanine. Residue R79 coordinates L-phenylalanine. The 262-residue stretch at 79-340 folds into the Chorismate mutase domain; it reads RVDESESLTL…QVEYLLRRLD (262 aa). L-tyrosine contacts are provided by residues R150 and 211–214; that span reads NYGS. 211–214 lines the L-phenylalanine pocket; sequence NYGS.

As to quaternary structure, homodimer. As to expression, expressed in roots, shoots, rosette leaves, stems, cauline leaves, flowers and siliques.

Its subcellular location is the plastid. It localises to the chloroplast. It catalyses the reaction chorismate = prephenate. It functions in the pathway metabolic intermediate biosynthesis; prephenate biosynthesis; prephenate from chorismate: step 1/1. With respect to regulation, allosterically inhibited by tyrosine and phenylalanine. Activated by tryptophan. Its function is as follows. May play a role in chloroplast biogenesis. The sequence is that of Chorismate mutase 1, chloroplastic from Arabidopsis thaliana (Mouse-ear cress).